Reading from the N-terminus, the 807-residue chain is Spondin-1 (807 aa).

A signal peptide spans 1–28; it reads MRLSPVSLRLSRGPALLALALPLAAALA. Residues 29–194 form the Reelin domain; sequence FSDETLDKVT…DPTLDGVTDR (166 aa). Cystine bridges form between C44-C128, C156-C182, C199-C336, C200-C340, C202-C415, C443-C480, C454-C489, C459-C494, C502-C538, C513-C517, C548-C554, C559-C595, C570-C574, C605-C610, C615-C650, C626-C630, and C660-C665. Positions 195–388 constitute a Spondin domain; that stretch reads PILDCCACGT…LTSLDHPQSP (194 aa). N214 carries N-linked (GlcNAc...) asparagine glycosylation. Ca(2+) is bound by residues D325, D354, and D358. 5 consecutive TSP type-1 domains span residues 442 to 495, 501 to 555, 558 to 611, 614 to 666, and 668 to 721; these read TCIY…PGCS, TCTM…EECS, SCLV…PECH, PCLL…PECP, and DCEL…RKCL. N681 is a glycosylation site (N-linked (GlcNAc...) asparagine). Over residues 732–746 the composition is skewed to basic and acidic residues; that stretch reads REARESRRSEQLREE. The tract at residues 732–752 is disordered; it reads REARESRRSEQLREESDGEQF. The 53-residue stretch at 754 to 806 folds into the TSP type-1 6 domain; it reads GCRMRPWTAWSECTKLCGGGIQERYMTVKKRFKSSQFTSCKDKKEIRACNVHP.

In terms of assembly, binds to the central extracellular domain of APP and inhibits beta-secretase cleavage of APP.

It localises to the secreted. The protein localises to the extracellular space. Its subcellular location is the extracellular matrix. In terms of biological role, cell adhesion protein that promotes the attachment of spinal cord and sensory neuron cells and the outgrowth of neurites in vitro. May contribute to the growth and guidance of axons in both the spinal cord and the PNS. This is Spondin-1 (Spon1) from Mus musculus (Mouse).